The following is a 171-amino-acid chain: UPF0763 protein HPP12_0677 (171 aa).

The protein belongs to the UPF0763 family.

This Helicobacter pylori (strain P12) protein is UPF0763 protein HPP12_0677.